Consider the following 386-residue polypeptide: Short integuments 2, mitochondrial (386 aa).

The region spanning 37–207 (TRAIRNRLKL…VLDSPGVLVP (171 aa)) is the CP-type G domain. The DARXP motif motif lies at 55-59 (DARIP). Residues 81 to 84 (NKKD) form a G4 region. GTP-binding positions include 81 to 84 (NKKD), 109 to 110 (NA), and 146 to 151 (NVGKSA). The interval 109-111 (NAH) is G5. The segment at 143–150 (GVPNVGKS) is G1. The G2 stretch occupies residues 180–184 (GVTQD). The segment at 200-203 (DSPG) is G3. Position 203 (Gly-203) interacts with GTP.

It belongs to the TRAFAC class YlqF/YawG GTPase family. MTG1 subfamily. Expressed in seedlings, roots, leaves, stems, inflorescences and siliques.

Its subcellular location is the mitochondrion. Its function is as follows. GTPase that may function in mitochondrial ribosome assembly. Involved in a variety of growth processes during vegetative development and promotes growth and cell division in the developing integuments. This Arabidopsis thaliana (Mouse-ear cress) protein is Short integuments 2, mitochondrial.